A 568-amino-acid chain; its full sequence is Proline--tRNA ligase (568 aa).

The protein belongs to the class-II aminoacyl-tRNA synthetase family. ProS type 1 subfamily. Homodimer.

It localises to the cytoplasm. It catalyses the reaction tRNA(Pro) + L-proline + ATP = L-prolyl-tRNA(Pro) + AMP + diphosphate. In terms of biological role, catalyzes the attachment of proline to tRNA(Pro) in a two-step reaction: proline is first activated by ATP to form Pro-AMP and then transferred to the acceptor end of tRNA(Pro). As ProRS can inadvertently accommodate and process non-cognate amino acids such as alanine and cysteine, to avoid such errors it has two additional distinct editing activities against alanine. One activity is designated as 'pretransfer' editing and involves the tRNA(Pro)-independent hydrolysis of activated Ala-AMP. The other activity is designated 'posttransfer' editing and involves deacylation of mischarged Ala-tRNA(Pro). The misacylated Cys-tRNA(Pro) is not edited by ProRS. This chain is Proline--tRNA ligase, found in Nitrosomonas eutropha (strain DSM 101675 / C91 / Nm57).